The following is a 293-amino-acid chain: Ribosomal protein L11 methyltransferase (293 aa).

Residues Thr144, Gly165, Asp187, and Asn228 each contribute to the S-adenosyl-L-methionine site.

It belongs to the methyltransferase superfamily. PrmA family.

It localises to the cytoplasm. It carries out the reaction L-lysyl-[protein] + 3 S-adenosyl-L-methionine = N(6),N(6),N(6)-trimethyl-L-lysyl-[protein] + 3 S-adenosyl-L-homocysteine + 3 H(+). In terms of biological role, methylates ribosomal protein L11. The protein is Ribosomal protein L11 methyltransferase of Methylococcus capsulatus (strain ATCC 33009 / NCIMB 11132 / Bath).